A 345-amino-acid polypeptide reads, in one-letter code: N-acetyl-gamma-glutamyl-phosphate reductase (345 aa).

Residue C142 is part of the active site.

The protein belongs to the NAGSA dehydrogenase family. Type 1 subfamily.

The protein resides in the cytoplasm. The enzyme catalyses N-acetyl-L-glutamate 5-semialdehyde + phosphate + NADP(+) = N-acetyl-L-glutamyl 5-phosphate + NADPH + H(+). The protein operates within amino-acid biosynthesis; L-arginine biosynthesis; N(2)-acetyl-L-ornithine from L-glutamate: step 3/4. Functionally, catalyzes the NADPH-dependent reduction of N-acetyl-5-glutamyl phosphate to yield N-acetyl-L-glutamate 5-semialdehyde. The protein is N-acetyl-gamma-glutamyl-phosphate reductase of Thermus thermophilus (strain ATCC BAA-163 / DSM 7039 / HB27).